Consider the following 431-residue polypeptide: Neuronal pentraxin-2 (431 aa).

The first 15 residues, 1–15 (MLALLAASVALAVAA), serve as a signal peptide directing secretion. N-linked (GlcNAc...) asparagine glycosylation is found at asparagine 148 and asparagine 189. In terms of domain architecture, Pentraxin (PTX) spans 223 to 424 (DAFKVSLPLR…GASKWPVETC (202 aa)). Cysteine 253 and cysteine 313 are disulfide-bonded. Ca(2+) is bound by residues asparagine 277, glutamate 355, glutamine 356, aspartate 357, and glutamine 367. An N-linked (GlcNAc...) asparagine glycan is attached at asparagine 393.

Homooligomer or heterooligomer (probably pentamer) with neuronal pentraxin receptor (NPTXR). Ca(2+) serves as cofactor. Brain, pancreas, liver, heart and skeletal muscle. Highest levels are seen in the testis.

Its subcellular location is the secreted. In terms of biological role, likely to play role in the modification of cellular properties that underlie long-term plasticity. Binds to agar matrix in a calcium-dependent manner. The polypeptide is Neuronal pentraxin-2 (NPTX2) (Homo sapiens (Human)).